The chain runs to 339 residues: Photosystem II assembly lipoprotein Ycf48 (339 aa).

The signal sequence occupies residues 1–22 (MVIVKSWQKIFTLLVVLLLCIG). C23 carries N-palmitoyl cysteine lipidation. C23 carries S-diacylglycerol cysteine lipidation.

This sequence belongs to the Ycf48 family. As to quaternary structure, part of early PSII assembly complexes which includes D1 (psbA) and PsbI; not found in mature PSII. Binds to the lumenal side of PSII complexes. Interacts with YidC.

It is found in the cellular thylakoid membrane. A factor required for optimal assembly of photosystem II (PSII), acting in the early stages of PSII assembly. Also plays a role in replacement of photodamaged D1 (psbA). Assists YidC in synthesis of chlorophyll-binding proteins. In Nostoc sp. (strain PCC 7120 / SAG 25.82 / UTEX 2576), this protein is Photosystem II assembly lipoprotein Ycf48.